A 240-amino-acid polypeptide reads, in one-letter code: Coiled-coil domain-containing protein 152 (240 aa).

A coiled-coil region spans residues 55–223 (MQTKEVAMKQ…LEQRLSVSKD (169 aa)).

In Bos taurus (Bovine), this protein is Coiled-coil domain-containing protein 152 (CCDC152).